The primary structure comprises 369 residues: Phospho-N-acetylmuramoyl-pentapeptide-transferase (369 aa).

The next 10 helical transmembrane spans lie at 2–22, 54–74, 80–100, 113–133, 158–178, 195–215, 241–261, 268–288, 293–313, and 347–367; these read IAIL…TPFF, GLVI…FLGL, GLLV…DDIL, FYKV…TFLV, ALFS…LLWI, LDGL…VIGF, PLDM…FLWW, IMMG…LSIL, LLFL…ILQI, and FWII…ADWL.

Belongs to the glycosyltransferase 4 family. MraY subfamily. The cofactor is Mg(2+).

It localises to the cell membrane. The catalysed reaction is UDP-N-acetyl-alpha-D-muramoyl-L-alanyl-gamma-D-glutamyl-meso-2,6-diaminopimeloyl-D-alanyl-D-alanine + di-trans,octa-cis-undecaprenyl phosphate = di-trans,octa-cis-undecaprenyl diphospho-N-acetyl-alpha-D-muramoyl-L-alanyl-D-glutamyl-meso-2,6-diaminopimeloyl-D-alanyl-D-alanine + UMP. The protein operates within cell wall biogenesis; peptidoglycan biosynthesis. Functionally, catalyzes the initial step of the lipid cycle reactions in the biosynthesis of the cell wall peptidoglycan: transfers peptidoglycan precursor phospho-MurNAc-pentapeptide from UDP-MurNAc-pentapeptide onto the lipid carrier undecaprenyl phosphate, yielding undecaprenyl-pyrophosphoryl-MurNAc-pentapeptide, known as lipid I. The protein is Phospho-N-acetylmuramoyl-pentapeptide-transferase of Tropheryma whipplei (strain TW08/27) (Whipple's bacillus).